The primary structure comprises 691 residues: Threonine--tRNA ligase (691 aa).

Residues 1 to 69 (MSTPEITPAA…QQDVEVAAVP (69 aa)) form the TGS domain. Residues 268-574 (DHRRLGQELD…LLEHYAGAFP (307 aa)) form a catalytic region. Residues Cys373, His424, and His551 each contribute to the Zn(2+) site.

It belongs to the class-II aminoacyl-tRNA synthetase family. As to quaternary structure, homodimer. Zn(2+) serves as cofactor.

Its subcellular location is the cytoplasm. It catalyses the reaction tRNA(Thr) + L-threonine + ATP = L-threonyl-tRNA(Thr) + AMP + diphosphate + H(+). In terms of biological role, catalyzes the attachment of threonine to tRNA(Thr) in a two-step reaction: L-threonine is first activated by ATP to form Thr-AMP and then transferred to the acceptor end of tRNA(Thr). Also edits incorrectly charged L-seryl-tRNA(Thr). The polypeptide is Threonine--tRNA ligase (Corynebacterium jeikeium (strain K411)).